A 599-amino-acid polypeptide reads, in one-letter code: DNA-directed RNA polymerase III subunit RPC3 (599 aa).

Residues proline 335–tyrosine 371 form a disordered region. The span at valine 359–tyrosine 371 shows a compositional bias: basic and acidic residues. A leucine-zipper region spans residues isoleucine 526–leucine 547.

It belongs to the RNA polymerase beta chain family. In terms of assembly, component of the RNA polymerase III (Pol III) complex consisting of 17 subunits.

It is found in the nucleus. DNA-dependent RNA polymerase catalyzes the transcription of DNA into RNA using the four ribonucleoside triphosphates as substrates. Specific core component of RNA polymerase III which synthesizes small RNAs, such as 5S rRNA and tRNAs. This chain is DNA-directed RNA polymerase III subunit RPC3 (RPC82), found in Yarrowia lipolytica (strain CLIB 122 / E 150) (Yeast).